The chain runs to 292 residues: Ferric aerobactin-binding protein VatD (292 aa).

The first 12 residues, Met1 to Ala12, serve as a signal peptide directing secretion. The 263-residue stretch at Lys30–Gln292 folds into the Fe/B12 periplasmic-binding domain. 8 residues coordinate desferrioxamine B: Trp61, Arg77, Tyr118, Arg185, Trp213, Phe215, Trp269, and Phe271.

Belongs to the bacterial solute-binding protein 8 family. As to quaternary structure, the complex is composed of two ATP-binding proteins (VatC), two transmembrane proteins (VatB) and a solute-binding protein (VatD).

It localises to the periplasm. In terms of biological role, part of the ABC transporter complex VatCDB involved in the import of iron(3+)-complexed aerobactin, a citrate-hydroxamate siderophore produced by other bacteria. Binds the iron(3+)-aerobactin complex and transfers it to the membrane-bound permease. Functions in the import of iron(3+)-complexed vulnibactin, a catecholate siderophore synthesized by V.vulnificus, in the absence of FatB. The polypeptide is Ferric aerobactin-binding protein VatD (Vibrio vulnificus).